The sequence spans 242 residues: Ribonuclease PH (242 aa).

Phosphate-binding positions include R87 and G125 to R127.

It belongs to the RNase PH family. As to quaternary structure, homohexameric ring arranged as a trimer of dimers.

It catalyses the reaction tRNA(n+1) + phosphate = tRNA(n) + a ribonucleoside 5'-diphosphate. Phosphorolytic 3'-5' exoribonuclease that plays an important role in tRNA 3'-end maturation. Removes nucleotide residues following the 3'-CCA terminus of tRNAs; can also add nucleotides to the ends of RNA molecules by using nucleoside diphosphates as substrates, but this may not be physiologically important. Probably plays a role in initiation of 16S rRNA degradation (leading to ribosome degradation) during starvation. The polypeptide is Ribonuclease PH (Thermosynechococcus vestitus (strain NIES-2133 / IAM M-273 / BP-1)).